We begin with the raw amino-acid sequence, 89 residues long: Small ribosomal subunit protein uS19 (89 aa).

This sequence belongs to the universal ribosomal protein uS19 family.

Protein S19 forms a complex with S13 that binds strongly to the 16S ribosomal RNA. The polypeptide is Small ribosomal subunit protein uS19 (Phocaeicola vulgatus (strain ATCC 8482 / DSM 1447 / JCM 5826 / CCUG 4940 / NBRC 14291 / NCTC 11154) (Bacteroides vulgatus)).